The primary structure comprises 1215 residues: Zinc finger SWIM domain-containing protein 6 (1215 aa).

Disordered regions lie at residues 1-46 and 133-161; these read MAER…RPGP and AAGGPGDDSGGGGGAGGGGGGGSSSSPAA. Composition is skewed to gly residues over residues 18-38 and 133-155; these read PGGGGGGGGSSGGGGGAGGGY and AAGGPGDDSGGGGGAGGGGGGGS. The SWIM-type zinc finger occupies 246 to 283; the sequence is CNVAISFDRCKITSVTCSCGNKDIFYCAHVVALSLYRI.

Involved in nervous system development, important for striatal morphology and motor regulation. The protein is Zinc finger SWIM domain-containing protein 6 of Homo sapiens (Human).